The sequence spans 223 residues: Endonuclease V (223 aa).

The Mg(2+) site is built by Asp35 and Asp103.

This sequence belongs to the endonuclease V family. Mg(2+) is required as a cofactor.

Its subcellular location is the cytoplasm. It carries out the reaction Endonucleolytic cleavage at apurinic or apyrimidinic sites to products with a 5'-phosphate.. Its function is as follows. DNA repair enzyme involved in the repair of deaminated bases. Selectively cleaves double-stranded DNA at the second phosphodiester bond 3' to a deoxyinosine leaving behind the intact lesion on the nicked DNA. The protein is Endonuclease V of Cronobacter sakazakii (strain ATCC BAA-894) (Enterobacter sakazakii).